A 252-amino-acid polypeptide reads, in one-letter code: dITP/XTP pyrophosphatase (252 aa).

7-12 (THNEGK) lines the substrate pocket. The active-site Proton acceptor is the Asp-74. Position 74 (Asp-74) interacts with Mg(2+). Substrate-binding positions include Ser-75 and 193–196 (FGYD). A disordered region spans residues 201–224 (PDDQPAGRVSTEPDHEGEPLTSAE). Residues Lys-230 and 235-236 (HR) contribute to the substrate site.

The protein belongs to the HAM1 NTPase family. In terms of assembly, homodimer. It depends on Mg(2+) as a cofactor.

The enzyme catalyses XTP + H2O = XMP + diphosphate + H(+). It carries out the reaction dITP + H2O = dIMP + diphosphate + H(+). It catalyses the reaction ITP + H2O = IMP + diphosphate + H(+). Functionally, pyrophosphatase that catalyzes the hydrolysis of nucleoside triphosphates to their monophosphate derivatives, with a high preference for the non-canonical purine nucleotides XTP (xanthosine triphosphate), dITP (deoxyinosine triphosphate) and ITP. Seems to function as a house-cleaning enzyme that removes non-canonical purine nucleotides from the nucleotide pool, thus preventing their incorporation into DNA/RNA and avoiding chromosomal lesions. The chain is dITP/XTP pyrophosphatase from Bifidobacterium longum subsp. infantis (strain ATCC 15697 / DSM 20088 / JCM 1222 / NCTC 11817 / S12).